A 402-amino-acid chain; its full sequence is tRNA(Met) cytidine acetate ligase (402 aa).

Residues 7–20 (ITEYNPFHLGHELH), glycine 102, asparagine 171, and arginine 196 contribute to the ATP site.

Belongs to the TmcAL family.

The protein localises to the cytoplasm. It catalyses the reaction cytidine(34) in elongator tRNA(Met) + acetate + ATP = N(4)-acetylcytidine(34) in elongator tRNA(Met) + AMP + diphosphate. In terms of biological role, catalyzes the formation of N(4)-acetylcytidine (ac(4)C) at the wobble position of elongator tRNA(Met), using acetate and ATP as substrates. First activates an acetate ion to form acetyladenylate (Ac-AMP) and then transfers the acetyl group to tRNA to form ac(4)C34. This is tRNA(Met) cytidine acetate ligase from Clostridium perfringens (strain SM101 / Type A).